The following is a 525-amino-acid chain: 2,3-bisphosphoglycerate-independent phosphoglycerate mutase 2 (525 aa).

Residues D14 and S64 each contribute to the Mn(2+) site. The Phosphoserine intermediate role is filled by S64. Substrate contacts are provided by residues H125, 155–156 (RD), R187, R193, 274–277 (RADR), and K347. Mn(2+)-binding residues include D414, H418, D455, H456, and H474.

The protein belongs to the BPG-independent phosphoglycerate mutase family. Mn(2+) serves as cofactor.

It catalyses the reaction (2R)-2-phosphoglycerate = (2R)-3-phosphoglycerate. The protein operates within carbohydrate degradation; glycolysis; pyruvate from D-glyceraldehyde 3-phosphate: step 3/5. In terms of biological role, catalyzes the interconversion of 2-phosphoglycerate and 3-phosphoglycerate. This is 2,3-bisphosphoglycerate-independent phosphoglycerate mutase 2 from Methanosarcina barkeri (strain Fusaro / DSM 804).